The following is a 221-amino-acid chain: Hypoxanthine-guanine phosphoribosyltransferase (221 aa).

Position 2 is an N-acetylserine (Ser-2). GMP contacts are provided by residues Lys-85, 110-118, Lys-159, and 188-194; these read DEVDDTRTT and WYAYPWE. Catalysis depends on Asp-114, which acts as the Proton acceptor.

It belongs to the purine/pyrimidine phosphoribosyltransferase family. Dimer. Mg(2+) serves as cofactor.

The protein localises to the cytoplasm. It is found in the nucleus. It carries out the reaction IMP + diphosphate = hypoxanthine + 5-phospho-alpha-D-ribose 1-diphosphate. The enzyme catalyses GMP + diphosphate = guanine + 5-phospho-alpha-D-ribose 1-diphosphate. Its pathway is purine metabolism; IMP biosynthesis via salvage pathway; IMP from hypoxanthine: step 1/1. Subject to feedback inhibition by GMP. Its function is as follows. Converts guanine to guanosine monophosphate, and hypoxanthine to inosine monophosphate. Transfers the 5-phosphoribosyl group from 5-phosphoribosylpyrophosphate onto the purine. Plays a central role in the generation of purine nucleotides through the purine salvage pathway. The chain is Hypoxanthine-guanine phosphoribosyltransferase (HPT1) from Saccharomyces cerevisiae (strain ATCC 204508 / S288c) (Baker's yeast).